The sequence spans 202 residues: Peptidyl-tRNA hydrolase (202 aa).

Tyr-14 contributes to the tRNA binding site. His-19 acts as the Proton acceptor in catalysis. Residues Tyr-64, Asn-66, and Asn-112 each coordinate tRNA.

Belongs to the PTH family. Monomer.

It is found in the cytoplasm. It carries out the reaction an N-acyl-L-alpha-aminoacyl-tRNA + H2O = an N-acyl-L-amino acid + a tRNA + H(+). Its function is as follows. Hydrolyzes ribosome-free peptidyl-tRNAs (with 1 or more amino acids incorporated), which drop off the ribosome during protein synthesis, or as a result of ribosome stalling. In terms of biological role, catalyzes the release of premature peptidyl moieties from peptidyl-tRNA molecules trapped in stalled 50S ribosomal subunits, and thus maintains levels of free tRNAs and 50S ribosomes. The chain is Peptidyl-tRNA hydrolase from Xanthobacter autotrophicus (strain ATCC BAA-1158 / Py2).